Here is a 484-residue protein sequence, read N- to C-terminus: Sperm motility kinase Tcr mutant form (484 aa).

A Protein kinase domain is found at 8-256 (YEMLETIGQG…VAEVMVHPWV (249 aa)). ATP is bound by residues 14–22 (IGQGGCAQV) and Lys37. The Proton acceptor role is filled by Asp127. 2 disordered regions span residues 355–400 (EPTG…TMDQ) and 426–446 (STEG…RGWP). Residues 391–400 (PINTTPTMDQ) are compositionally biased toward polar residues.

The protein belongs to the protein kinase superfamily. Tyr protein kinase family. Smok subfamily. As to expression, testis-specific. Expressed in the testis from 22 days postpartum (22 dpp). Expressed late in spermiogenesis, only in Tcr-containing t-haplotypes.

The enzyme catalyses L-seryl-[protein] + ATP = O-phospho-L-seryl-[protein] + ADP + H(+). It catalyses the reaction L-threonyl-[protein] + ATP = O-phospho-L-threonyl-[protein] + ADP + H(+). In terms of biological role, while the main function of Smoks is to control sperm motility, the role of Smok-Tcr, with reduced kinase activity, is to counterbalance a signaling impairment caused by the distorter/sterility loci, giving t-sperm an advantage in reaching the oocytes. Transmission ratio distortion also called segregation distortion is the name given to the phenomenon above-mentioned. Being associated with the T-complex, it allows males heterozygous for a complete t-haplotype to preferentially transmit the t-haplotype chromosome. In Mus musculus (Mouse), this protein is Sperm motility kinase Tcr mutant form (Smoktcr).